The chain runs to 186 residues: Cell division protein ZapC (186 aa).

Belongs to the ZapC family. As to quaternary structure, interacts directly with FtsZ.

Its subcellular location is the cytoplasm. Contributes to the efficiency of the cell division process by stabilizing the polymeric form of the cell division protein FtsZ. Acts by promoting interactions between FtsZ protofilaments and suppressing the GTPase activity of FtsZ. The chain is Cell division protein ZapC from Musicola paradisiaca (strain Ech703) (Dickeya paradisiaca).